A 355-amino-acid chain; its full sequence is 3-dehydroquinate synthase (355 aa).

NAD(+) contacts are provided by residues 105-109, 129-130, Lys-142, Lys-151, and 169-172; these read GVVGD, TS, and TLKT. Residues Glu-184, His-246, and His-263 each coordinate Zn(2+).

Belongs to the sugar phosphate cyclases superfamily. Dehydroquinate synthase family. Co(2+) is required as a cofactor. The cofactor is Zn(2+). NAD(+) serves as cofactor.

Its subcellular location is the cytoplasm. The catalysed reaction is 7-phospho-2-dehydro-3-deoxy-D-arabino-heptonate = 3-dehydroquinate + phosphate. Its pathway is metabolic intermediate biosynthesis; chorismate biosynthesis; chorismate from D-erythrose 4-phosphate and phosphoenolpyruvate: step 2/7. In terms of biological role, catalyzes the conversion of 3-deoxy-D-arabino-heptulosonate 7-phosphate (DAHP) to dehydroquinate (DHQ). The protein is 3-dehydroquinate synthase of Streptococcus agalactiae serotype Ia (strain ATCC 27591 / A909 / CDC SS700).